A 143-amino-acid polypeptide reads, in one-letter code: Pathogenesis-related protein P2 (143 aa).

An N-terminal signal peptide occupies residues 1–23 (MERVNKLCVAFFVINMMMAVAAA). Residues 24–143 (QSATNVRATY…LNVNYEFVNC (120 aa)) enclose the Barwin domain. 3 disulfides stabilise this stretch: Cys-52–Cys-84, Cys-73–Cys-107, and Cys-87–Cys-143.

The protein localises to the secreted. The protein resides in the cell wall. This is Pathogenesis-related protein P2 from Solanum lycopersicum (Tomato).